We begin with the raw amino-acid sequence, 405 residues long: Potassium channel subfamily K member 13 (405 aa).

Topologically, residues 1-19 (MAGRGCGCSPGHLNEDNAR) are cytoplasmic. A helical membrane pass occupies residues 20 to 40 (FLLLAGLILLYLLGGAAVFSA). 2 N-linked (GlcNAc...) asparagine glycosylation sites follow: asparagine 59 and asparagine 65. Positions 95-115 (WDFTGAFYFVGTVVSTIGFGM) form an intramembrane region, pore-forming. Residues threonine 110, isoleucine 111, and glycine 112 each contribute to the K(+) site. The segment at 110–115 (TIGFGM) is selectivity filter 1. Residues 125-145 (IFLIFYGLIGCASTILFFNLF) form a helical membrane-spanning segment. The Cytoplasmic portion of the chain corresponds to 146–193 (LERLITVIACVMRSCHQQQLRRRGAVTQDNMKAPEKGEADSLTGWKPS). A helical membrane pass occupies residues 194–214 (VYYVMLILCLASVAISCGASA). Positions 224 to 244 (YFDSVYFCFVAFSTIGFGDLV) form an intramembrane region, pore-forming. Threonine 237, isoleucine 238, glycine 239, and phenylalanine 240 together coordinate K(+). Residues 237-242 (TIGFGD) are selectivity filter 2. The chain crosses the membrane as a helical span at residues 263–283 (FLILMGVCCIYSLFNVISILI). Topologically, residues 284-405 (KQTVNWILRK…NRLAETSGDR (122 aa)) are cytoplasmic.

Belongs to the two pore domain potassium channel (TC 1.A.1.8) family. As to quaternary structure, homodimer. Heterodimer with KCNK12.

The protein resides in the cell membrane. The catalysed reaction is K(+)(in) = K(+)(out). In terms of biological role, k(+) channel that conducts outward rectifying tonic currents potentiated by purinergic signals. Homo- and heterodimerizes to form functional channels with distinct regulatory and gating properties. Contributes most of K(+) currents at the plasma membrane of resting microglia. Maintains a depolarized membrane potential required for proper ramified microglia morphology and phagocytosis, selectively mediating microglial pruning of presynaptic compartments at hippocampal excitatory synapses. Upon local release of ATP caused by neuronal injury or infection, it is potentiated by P2RY12 and P2RX7 receptor signaling and contributes to ATP-triggered K(+) efflux underlying microglial NLRP3 inflammasome assembly and IL1B release. The sequence is that of Potassium channel subfamily K member 13 from Mus musculus (Mouse).